A 113-amino-acid polypeptide reads, in one-letter code: Beta-defensin 112 (113 aa).

3 cysteine pairs are disulfide-bonded: Cys-54–Cys-82, Cys-61–Cys-75, and Cys-65–Cys-83.

It belongs to the beta-defensin family.

Its subcellular location is the secreted. Has antibacterial activity. This is Beta-defensin 112 (DEFB112) from Pan troglodytes (Chimpanzee).